The sequence spans 30 residues: Gamma-II crystallin (30 aa).

One can recognise a Beta/gamma crystallin 'Greek key' domain in the interval Gly-1–Ser-30.

The protein belongs to the beta/gamma-crystallin family. Monomer.

Crystallins are the dominant structural components of the vertebrate eye lens. The polypeptide is Gamma-II crystallin (Rhizoprionodon acutus (Milk shark)).